We begin with the raw amino-acid sequence, 336 residues long: Tyrosine recombinase XerC (336 aa).

Positions 14 to 106 (VANCRWLGEF…SVKSFYRFLL (93 aa)) constitute a Core-binding (CB) domain. The Tyr recombinase domain occupies 127 to 330 (KIPDFLSEEE…TFNRLRDAYT (204 aa)). Active-site residues include Arg-183, Lys-207, His-282, Arg-285, and His-308. Tyr-317 functions as the O-(3'-phospho-DNA)-tyrosine intermediate in the catalytic mechanism.

The protein belongs to the 'phage' integrase family. XerC subfamily. Forms a cyclic heterotetrameric complex composed of two molecules of XerC and two molecules of XerD.

Its subcellular location is the cytoplasm. Site-specific tyrosine recombinase, which acts by catalyzing the cutting and rejoining of the recombining DNA molecules. The XerC-XerD complex is essential to convert dimers of the bacterial chromosome into monomers to permit their segregation at cell division. It also contributes to the segregational stability of plasmids. In Chlorobaculum tepidum (strain ATCC 49652 / DSM 12025 / NBRC 103806 / TLS) (Chlorobium tepidum), this protein is Tyrosine recombinase XerC.